The primary structure comprises 176 residues: Crossover junction endodeoxyribonuclease RuvC (176 aa).

Residues D10, E69, and D141 contribute to the active site. Mg(2+) is bound by residues D10, E69, and D141.

The protein belongs to the RuvC family. In terms of assembly, homodimer which binds Holliday junction (HJ) DNA. The HJ becomes 2-fold symmetrical on binding to RuvC with unstacked arms; it has a different conformation from HJ DNA in complex with RuvA. In the full resolvosome a probable DNA-RuvA(4)-RuvB(12)-RuvC(2) complex forms which resolves the HJ. The cofactor is Mg(2+).

It is found in the cytoplasm. The enzyme catalyses Endonucleolytic cleavage at a junction such as a reciprocal single-stranded crossover between two homologous DNA duplexes (Holliday junction).. Its function is as follows. The RuvA-RuvB-RuvC complex processes Holliday junction (HJ) DNA during genetic recombination and DNA repair. Endonuclease that resolves HJ intermediates. Cleaves cruciform DNA by making single-stranded nicks across the HJ at symmetrical positions within the homologous arms, yielding a 5'-phosphate and a 3'-hydroxyl group; requires a central core of homology in the junction. The consensus cleavage sequence is 5'-(A/T)TT(C/G)-3'. Cleavage occurs on the 3'-side of the TT dinucleotide at the point of strand exchange. HJ branch migration catalyzed by RuvA-RuvB allows RuvC to scan DNA until it finds its consensus sequence, where it cleaves and resolves the cruciform DNA. This chain is Crossover junction endodeoxyribonuclease RuvC, found in Dichelobacter nodosus (strain VCS1703A).